The following is a 440-amino-acid chain: Enolase (440 aa).

Glutamine 163 provides a ligand contact to (2R)-2-phosphoglycerate. Glutamate 205 serves as the catalytic Proton donor. Residues aspartate 242, glutamate 288, and aspartate 315 each contribute to the Mg(2+) site. The (2R)-2-phosphoglycerate site is built by lysine 340, arginine 369, serine 370, and lysine 391. Lysine 340 serves as the catalytic Proton acceptor.

The protein belongs to the enolase family. Requires Mg(2+) as cofactor.

The protein resides in the cytoplasm. It is found in the secreted. It localises to the cell surface. The enzyme catalyses (2R)-2-phosphoglycerate = phosphoenolpyruvate + H2O. It participates in carbohydrate degradation; glycolysis; pyruvate from D-glyceraldehyde 3-phosphate: step 4/5. Its function is as follows. Catalyzes the reversible conversion of 2-phosphoglycerate (2-PG) into phosphoenolpyruvate (PEP). It is essential for the degradation of carbohydrates via glycolysis. The protein is Enolase of Limosilactobacillus fermentum (strain NBRC 3956 / LMG 18251) (Lactobacillus fermentum).